The following is a 131-amino-acid chain: Global transcriptional regulator Spx (131 aa).

Cys-10 and Cys-13 are oxidised to a cystine.

It belongs to the ArsC family. Spx subfamily. As to quaternary structure, interacts with the C-terminal domain of the alpha subunit of the RNAP.

Its subcellular location is the cytoplasm. Functionally, global transcriptional regulator that plays a key role in stress response and exerts either positive or negative regulation of genes. Acts by interacting with the C-terminal domain of the alpha subunit of the RNA polymerase (RNAP). This interaction can enhance binding of RNAP to the promoter region of target genes and stimulate their transcription, or block interaction of RNAP with activator. The polypeptide is Global transcriptional regulator Spx (Staphylococcus haemolyticus (strain JCSC1435)).